Consider the following 66-residue polypeptide: Beta-toxin Cll1m (66 aa).

Residues 1 to 66 (KEGYIVNLST…VWPLPKKTCT (66 aa)) enclose the LCN-type CS-alpha/beta domain. 4 cysteine pairs are disulfide-bonded: Cys12–Cys65, Cys16–Cys41, Cys25–Cys46, and Cys29–Cys48. Threonine amide is present on Thr66.

This sequence belongs to the long (4 C-C) scorpion toxin superfamily. Sodium channel inhibitor family. Beta subfamily. Expressed by the venom gland.

Its subcellular location is the secreted. In terms of biological role, beta toxins bind voltage-independently at site-4 of sodium channels (Nav) and shift the voltage of activation toward more negative potentials thereby affecting sodium channel activation and promoting spontaneous and repetitive firing. This chain is Beta-toxin Cll1m, found in Centruroides limpidus (Mexican scorpion).